A 252-amino-acid chain; its full sequence is Carboxy-S-adenosyl-L-methionine synthase (252 aa).

Residues tyrosine 45, 70-72 (GCS), 95-96 (DN), 123-124 (DI), asparagine 138, and arginine 205 contribute to the S-adenosyl-L-methionine site.

It belongs to the class I-like SAM-binding methyltransferase superfamily. Cx-SAM synthase family. As to quaternary structure, homodimer.

It carries out the reaction prephenate + S-adenosyl-L-methionine = carboxy-S-adenosyl-L-methionine + 3-phenylpyruvate + H2O. Catalyzes the conversion of S-adenosyl-L-methionine (SAM) to carboxy-S-adenosyl-L-methionine (Cx-SAM). This is Carboxy-S-adenosyl-L-methionine synthase from Photorhabdus laumondii subsp. laumondii (strain DSM 15139 / CIP 105565 / TT01) (Photorhabdus luminescens subsp. laumondii).